A 507-amino-acid polypeptide reads, in one-letter code: ATP synthase subunit alpha, chloroplastic (507 aa).

170–177 is a binding site for ATP; sequence GDRQTGKT. At threonine 257 the chain carries Phosphothreonine.

It belongs to the ATPase alpha/beta chains family. As to quaternary structure, F-type ATPases have 2 components, CF(1) - the catalytic core - and CF(0) - the membrane proton channel. CF(1) has five subunits: alpha(3), beta(3), gamma(1), delta(1), epsilon(1). CF(0) has four main subunits: a, b, b' and c.

The protein localises to the plastid. The protein resides in the chloroplast thylakoid membrane. It carries out the reaction ATP + H2O + 4 H(+)(in) = ADP + phosphate + 5 H(+)(out). Functionally, produces ATP from ADP in the presence of a proton gradient across the membrane. The alpha chain is a regulatory subunit. In Arabis hirsuta (Hairy rock-cress), this protein is ATP synthase subunit alpha, chloroplastic.